A 364-amino-acid polypeptide reads, in one-letter code: Aminomethyltransferase (364 aa).

Belongs to the GcvT family. As to quaternary structure, the glycine cleavage system is composed of four proteins: P, T, L and H.

The catalysed reaction is N(6)-[(R)-S(8)-aminomethyldihydrolipoyl]-L-lysyl-[protein] + (6S)-5,6,7,8-tetrahydrofolate = N(6)-[(R)-dihydrolipoyl]-L-lysyl-[protein] + (6R)-5,10-methylene-5,6,7,8-tetrahydrofolate + NH4(+). Functionally, the glycine cleavage system catalyzes the degradation of glycine. The chain is Aminomethyltransferase from Proteus mirabilis (strain HI4320).